An 84-amino-acid polypeptide reads, in one-letter code: Small ribosomal subunit protein uS17 (84 aa).

This sequence belongs to the universal ribosomal protein uS17 family. Part of the 30S ribosomal subunit.

Its function is as follows. One of the primary rRNA binding proteins, it binds specifically to the 5'-end of 16S ribosomal RNA. This chain is Small ribosomal subunit protein uS17, found in Photorhabdus laumondii subsp. laumondii (strain DSM 15139 / CIP 105565 / TT01) (Photorhabdus luminescens subsp. laumondii).